Here is a 348-residue protein sequence, read N- to C-terminus: 4-hydroxy-3-methylbut-2-enyl diphosphate reductase (348 aa).

C21 contributes to the [4Fe-4S] cluster binding site. (2E)-4-hydroxy-3-methylbut-2-enyl diphosphate-binding residues include H50 and H86. Residues H50 and H86 each contribute to the dimethylallyl diphosphate site. Residues H50 and H86 each coordinate isopentenyl diphosphate. Position 108 (C108) interacts with [4Fe-4S] cluster. A (2E)-4-hydroxy-3-methylbut-2-enyl diphosphate-binding site is contributed by H136. Dimethylallyl diphosphate is bound at residue H136. H136 is an isopentenyl diphosphate binding site. E138 acts as the Proton donor in catalysis. Residue T177 participates in (2E)-4-hydroxy-3-methylbut-2-enyl diphosphate binding. Position 207 (C207) interacts with [4Fe-4S] cluster. Residues S235, S236, N237, and S280 each contribute to the (2E)-4-hydroxy-3-methylbut-2-enyl diphosphate site. Dimethylallyl diphosphate contacts are provided by S235, S236, N237, and S280. Isopentenyl diphosphate is bound by residues S235, S236, N237, and S280.

It belongs to the IspH family. Requires [4Fe-4S] cluster as cofactor.

The enzyme catalyses isopentenyl diphosphate + 2 oxidized [2Fe-2S]-[ferredoxin] + H2O = (2E)-4-hydroxy-3-methylbut-2-enyl diphosphate + 2 reduced [2Fe-2S]-[ferredoxin] + 2 H(+). The catalysed reaction is dimethylallyl diphosphate + 2 oxidized [2Fe-2S]-[ferredoxin] + H2O = (2E)-4-hydroxy-3-methylbut-2-enyl diphosphate + 2 reduced [2Fe-2S]-[ferredoxin] + 2 H(+). It functions in the pathway isoprenoid biosynthesis; dimethylallyl diphosphate biosynthesis; dimethylallyl diphosphate from (2E)-4-hydroxy-3-methylbutenyl diphosphate: step 1/1. The protein operates within isoprenoid biosynthesis; isopentenyl diphosphate biosynthesis via DXP pathway; isopentenyl diphosphate from 1-deoxy-D-xylulose 5-phosphate: step 6/6. In terms of biological role, catalyzes the conversion of 1-hydroxy-2-methyl-2-(E)-butenyl 4-diphosphate (HMBPP) into a mixture of isopentenyl diphosphate (IPP) and dimethylallyl diphosphate (DMAPP). Acts in the terminal step of the DOXP/MEP pathway for isoprenoid precursor biosynthesis. The chain is 4-hydroxy-3-methylbut-2-enyl diphosphate reductase from Agrobacterium fabrum (strain C58 / ATCC 33970) (Agrobacterium tumefaciens (strain C58)).